The primary structure comprises 334 residues: Adenine deaminase (334 aa).

3 residues coordinate Zn(2+): His-14, His-16, and His-194. The active-site Proton donor is Glu-197. Asp-275 is a Zn(2+) binding site. Asp-276 contacts substrate.

The protein belongs to the metallo-dependent hydrolases superfamily. Adenosine and AMP deaminases family. Adenine deaminase type 2 subfamily. Zn(2+) is required as a cofactor.

It carries out the reaction adenine + H2O + H(+) = hypoxanthine + NH4(+). In terms of biological role, catalyzes the hydrolytic deamination of adenine to hypoxanthine. Plays an important role in the purine salvage pathway and in nitrogen catabolism. This Hahella chejuensis (strain KCTC 2396) protein is Adenine deaminase.